Reading from the N-terminus, the 317-residue chain is Secreted frizzled-related protein 5 (317 aa).

Positions 1 to 29 (MRAAAAGGGVRTAALALLLGALHWAPARC) are cleaved as a signal peptide. One can recognise an FZ domain in the interval 48-165 (SKPPQCLDIP…PLDNDLCIAV (118 aa)). Cystine bridges form between Cys53-Cys116, Cys63-Cys109, Cys100-Cys135, Cys124-Cys162, Cys128-Cys152, Cys181-Cys253, Cys184-Cys255, and Cys198-Cys303. One can recognise an NTR domain in the interval 181–303 (CAQCEMEHSA…AVKFMFSYPC (123 aa)).

This sequence belongs to the secreted frizzled-related protein (sFRP) family. Highly expressed in the retinal pigment epithelium (RPE) and pancreas. Weak expression in heart, liver and muscle.

It is found in the secreted. Soluble frizzled-related proteins (sFRPS) function as modulators of Wnt signaling through direct interaction with Wnts. They have a role in regulating cell growth and differentiation in specific cell types. SFRP5 may be involved in determining the polarity of photoreceptor, and perhaps, other cells in the retina. The chain is Secreted frizzled-related protein 5 (SFRP5) from Homo sapiens (Human).